Reading from the N-terminus, the 118-residue chain is U16-barytoxin-Tl1c (118 aa).

The N-terminal stretch at 1 to 16 (MKTIIVFLSFLVLVLA) is a signal peptide. Residues 17–76 (TKFGDANEGVNREQTKEVIQNEFRGDFLNEMAAMSLLQQLEAIESALLEKEADRNSRQKR) constitute a propeptide that is removed on maturation. Disulfide bonds link cysteine 77-cysteine 92, cysteine 84-cysteine 97, and cysteine 91-cysteine 112.

It belongs to the neurotoxin 14 (magi-1) family. 06 (ICK-Trit) subfamily. As to expression, expressed by the venom gland.

It is found in the secreted. Functionally, ion channel inhibitor. This chain is U16-barytoxin-Tl1c, found in Trittame loki (Brush-footed trapdoor spider).